Reading from the N-terminus, the 392-residue chain is Succinate--CoA ligase [ADP-forming] subunit beta (392 aa).

The ATP-grasp domain occupies 9–236 (RDLFERHGLP…QAAVDPLEQA (228 aa)). ATP contacts are provided by residues Lys-45, 52 to 54 (GRG), Ala-94, and Glu-99. Residues Asn-191 and Asp-205 each coordinate Mg(2+). Substrate-binding positions include Asn-256 and 318–320 (GIT).

This sequence belongs to the succinate/malate CoA ligase beta subunit family. As to quaternary structure, heterotetramer of two alpha and two beta subunits. It depends on Mg(2+) as a cofactor.

It catalyses the reaction succinate + ATP + CoA = succinyl-CoA + ADP + phosphate. The catalysed reaction is GTP + succinate + CoA = succinyl-CoA + GDP + phosphate. Its pathway is carbohydrate metabolism; tricarboxylic acid cycle; succinate from succinyl-CoA (ligase route): step 1/1. Succinyl-CoA synthetase functions in the citric acid cycle (TCA), coupling the hydrolysis of succinyl-CoA to the synthesis of either ATP or GTP and thus represents the only step of substrate-level phosphorylation in the TCA. The beta subunit provides nucleotide specificity of the enzyme and binds the substrate succinate, while the binding sites for coenzyme A and phosphate are found in the alpha subunit. The sequence is that of Succinate--CoA ligase [ADP-forming] subunit beta from Salinispora tropica (strain ATCC BAA-916 / DSM 44818 / JCM 13857 / NBRC 105044 / CNB-440).